We begin with the raw amino-acid sequence, 299 residues long: Protoheme IX farnesyltransferase (299 aa).

The next 9 helical transmembrane spans lie at 25-45, 47-67, 95-115, 119-139, 147-167, 173-193, 218-238, 243-263, and 279-299; these read VVLLMLITSLVGMFLATRAGV, WTVLLFGNLGIGLCAGAAAAV, AAAIAFALLLATAGMGLLLLF, LAAWLTLASLLGYAVIYTGFL, IVIGGLAGAAPPLLGWVAVTG, PLLLVLIIFAWTPPHFWALAI, VHILLYTLVMFAVTLLPYAIH, LYLVCALLLGARFLHWAWVLY, and IWYLFLLFIALLADHYLLLNI.

The protein belongs to the UbiA prenyltransferase family. Protoheme IX farnesyltransferase subfamily.

The protein resides in the cell inner membrane. The catalysed reaction is heme b + (2E,6E)-farnesyl diphosphate + H2O = Fe(II)-heme o + diphosphate. Its pathway is porphyrin-containing compound metabolism; heme O biosynthesis; heme O from protoheme: step 1/1. In terms of biological role, converts heme B (protoheme IX) to heme O by substitution of the vinyl group on carbon 2 of heme B porphyrin ring with a hydroxyethyl farnesyl side group. The sequence is that of Protoheme IX farnesyltransferase from Ectopseudomonas mendocina (strain ymp) (Pseudomonas mendocina).